Here is a 723-residue protein sequence, read N- to C-terminus: Tripartite motif-containing protein 42 (723 aa).

The RING-type zinc finger occupies 146–192 (CPMCSRLRLHSFMLPCNHSLCEKCLRQLQKHAEVTENFFILICPVCD). 2 consecutive B box-type zinc fingers follow at residues 235-280 (PILC…FVDT) and 285-326 (QDEK…TISL). Positions 290, 293, 313, and 318 each coordinate Zn(2+). Residues 382-407 (KLRSILQEKEKIIMEQIENLEVSRQK) are a coiled coil. A COS domain is found at 434–492 (LKETGQVAFLQSAKILVDQIEDGIQTTYRPDPQLRLHSINYVPLDFVELSSAIHELFPT). In terms of domain architecture, Fibronectin type-III spans 603-701 (TPGPIVIYQT…DICKVVTPDG (99 aa)).

The protein belongs to the TRIM/RBCC family.

This Homo sapiens (Human) protein is Tripartite motif-containing protein 42 (TRIM42).